Consider the following 282-residue polypeptide: 1D-myo-inositol 2-acetamido-2-deoxy-alpha-D-glucopyranoside deacetylase (282 aa).

Zn(2+) contacts are provided by histidine 6, aspartate 9, and histidine 141.

The protein belongs to the MshB deacetylase family. Zn(2+) serves as cofactor.

It catalyses the reaction 1D-myo-inositol 2-acetamido-2-deoxy-alpha-D-glucopyranoside + H2O = 1D-myo-inositol 2-amino-2-deoxy-alpha-D-glucopyranoside + acetate. Functionally, catalyzes the deacetylation of 1D-myo-inositol 2-acetamido-2-deoxy-alpha-D-glucopyranoside (GlcNAc-Ins) in the mycothiol biosynthesis pathway. The protein is 1D-myo-inositol 2-acetamido-2-deoxy-alpha-D-glucopyranoside deacetylase of Nocardiopsis dassonvillei (strain ATCC 23218 / DSM 43111 / CIP 107115 / JCM 7437 / KCTC 9190 / NBRC 14626 / NCTC 10488 / NRRL B-5397 / IMRU 509) (Actinomadura dassonvillei).